The following is a 123-amino-acid chain: Large ribosomal subunit protein bL12 (123 aa).

This sequence belongs to the bacterial ribosomal protein bL12 family. Homodimer. Part of the ribosomal stalk of the 50S ribosomal subunit. Forms a multimeric L10(L12)X complex, where L10 forms an elongated spine to which 2 to 4 L12 dimers bind in a sequential fashion. Binds GTP-bound translation factors.

Functionally, forms part of the ribosomal stalk which helps the ribosome interact with GTP-bound translation factors. Is thus essential for accurate translation. The sequence is that of Large ribosomal subunit protein bL12 from Hydrogenovibrio crunogenus (strain DSM 25203 / XCL-2) (Thiomicrospira crunogena).